We begin with the raw amino-acid sequence, 298 residues long: Protease HtpX (298 aa).

The next 2 membrane-spanning stretches (helical) occupy residues 4–24 (IALY…TLSL) and 41–61 (TSLL…SLLI). His147 is a binding site for Zn(2+). Residue Glu148 is part of the active site. Residue His151 coordinates Zn(2+). 2 helical membrane passes run 162-182 (LIQG…GYVI) and 193-213 (GLGF…GIAA). Glu225 lines the Zn(2+) pocket.

Belongs to the peptidase M48B family. Zn(2+) is required as a cofactor.

The protein localises to the cell inner membrane. This is Protease HtpX from Alcanivorax borkumensis (strain ATCC 700651 / DSM 11573 / NCIMB 13689 / SK2).